We begin with the raw amino-acid sequence, 434 residues long: Nicotinate phosphoribosyltransferase (434 aa).

Position 242 is a phosphohistidine; by autocatalysis (His242).

The protein belongs to the NAPRTase family. Post-translationally, transiently phosphorylated on a His residue during the reaction cycle. Phosphorylation strongly increases the affinity for substrates and increases the rate of nicotinate D-ribonucleotide production. Dephosphorylation regenerates the low-affinity form of the enzyme, leading to product release.

The enzyme catalyses nicotinate + 5-phospho-alpha-D-ribose 1-diphosphate + ATP + H2O = nicotinate beta-D-ribonucleotide + ADP + phosphate + diphosphate. It participates in cofactor biosynthesis; NAD(+) biosynthesis; nicotinate D-ribonucleotide from nicotinate: step 1/1. Functionally, catalyzes the synthesis of beta-nicotinate D-ribonucleotide from nicotinate and 5-phospho-D-ribose 1-phosphate at the expense of ATP. The sequence is that of Nicotinate phosphoribosyltransferase from Allorhizobium ampelinum (strain ATCC BAA-846 / DSM 112012 / S4) (Agrobacterium vitis (strain S4)).